The sequence spans 185 residues: Crossover junction endodeoxyribonuclease RuvC (185 aa).

Active-site residues include D7, E68, and D141. Mg(2+) contacts are provided by D7, E68, and D141.

It belongs to the RuvC family. In terms of assembly, homodimer which binds Holliday junction (HJ) DNA. The HJ becomes 2-fold symmetrical on binding to RuvC with unstacked arms; it has a different conformation from HJ DNA in complex with RuvA. In the full resolvosome a probable DNA-RuvA(4)-RuvB(12)-RuvC(2) complex forms which resolves the HJ. It depends on Mg(2+) as a cofactor.

The protein resides in the cytoplasm. It catalyses the reaction Endonucleolytic cleavage at a junction such as a reciprocal single-stranded crossover between two homologous DNA duplexes (Holliday junction).. Functionally, the RuvA-RuvB-RuvC complex processes Holliday junction (HJ) DNA during genetic recombination and DNA repair. Endonuclease that resolves HJ intermediates. Cleaves cruciform DNA by making single-stranded nicks across the HJ at symmetrical positions within the homologous arms, yielding a 5'-phosphate and a 3'-hydroxyl group; requires a central core of homology in the junction. The consensus cleavage sequence is 5'-(A/T)TT(C/G)-3'. Cleavage occurs on the 3'-side of the TT dinucleotide at the point of strand exchange. HJ branch migration catalyzed by RuvA-RuvB allows RuvC to scan DNA until it finds its consensus sequence, where it cleaves and resolves the cruciform DNA. This chain is Crossover junction endodeoxyribonuclease RuvC, found in Mycolicibacterium smegmatis (strain ATCC 700084 / mc(2)155) (Mycobacterium smegmatis).